Reading from the N-terminus, the 791-residue chain is Protein CLASP-2 (791 aa).

Composition is skewed to low complexity over residues 259 to 271, 323 to 334, and 372 to 381; these read ASDA…SVNS, RTPNTRPMTTRT, and SQPGSRNGSP. Disordered stretches follow at residues 259-283, 315-391, and 422-454; these read ASDA…SKLS, TRMT…TGTL, and AMNT…PQKS. A compositionally biased stretch (polar residues) spans 422 to 434; that stretch reads AMNTAKESLGQPS.

This sequence belongs to the CLASP family. In terms of assembly, interacts with hcp-1 and hcp-2.

Its subcellular location is the cytoplasm. It localises to the cytoskeleton. It is found in the microtubule organizing center. The protein localises to the centrosome. The protein resides in the chromosome. Its subcellular location is the centromere. It localises to the kinetochore. It is found in the spindle. Its function is as follows. Probable microtubule plus-end tracking protein that promotes the stabilization of dynamic microtubules. Required for the formation of mitotic and meiotic spindles. Specifically promotes the polymerization of kinetochore-bound microtubules. Also required for cytoplasmic streaming. This is Protein CLASP-2 (cls-2) from Caenorhabditis briggsae.